The following is a 265-amino-acid chain: tRNA pseudouridine synthase A (265 aa).

The active-site Nucleophile is aspartate 58. Tyrosine 116 contributes to the substrate binding site.

The protein belongs to the tRNA pseudouridine synthase TruA family. Homodimer.

It catalyses the reaction uridine(38/39/40) in tRNA = pseudouridine(38/39/40) in tRNA. Its function is as follows. Formation of pseudouridine at positions 38, 39 and 40 in the anticodon stem and loop of transfer RNAs. In Neisseria gonorrhoeae (strain NCCP11945), this protein is tRNA pseudouridine synthase A.